The following is a 500-amino-acid chain: Lysine--tRNA ligase (500 aa).

Residues glutamate 407 and glutamate 414 each coordinate Mg(2+).

It belongs to the class-II aminoacyl-tRNA synthetase family. In terms of assembly, homodimer. The cofactor is Mg(2+).

It is found in the cytoplasm. The catalysed reaction is tRNA(Lys) + L-lysine + ATP = L-lysyl-tRNA(Lys) + AMP + diphosphate. The protein is Lysine--tRNA ligase of Azobacteroides pseudotrichonymphae genomovar. CFP2.